A 214-amino-acid polypeptide reads, in one-letter code: 3,4-dihydroxy-2-butanone 4-phosphate synthase (214 aa).

D-ribulose 5-phosphate-binding positions include 37–38 (RE), D42, 150–154 (RRGHT), and E174. E38 contacts Mg(2+). H153 contacts Mg(2+).

It belongs to the DHBP synthase family. In terms of assembly, homodimer. Mg(2+) is required as a cofactor. Mn(2+) serves as cofactor.

It catalyses the reaction D-ribulose 5-phosphate = (2S)-2-hydroxy-3-oxobutyl phosphate + formate + H(+). The protein operates within cofactor biosynthesis; riboflavin biosynthesis; 2-hydroxy-3-oxobutyl phosphate from D-ribulose 5-phosphate: step 1/1. Functionally, catalyzes the conversion of D-ribulose 5-phosphate to formate and 3,4-dihydroxy-2-butanone 4-phosphate. In Nitratidesulfovibrio vulgaris (strain DP4) (Desulfovibrio vulgaris), this protein is 3,4-dihydroxy-2-butanone 4-phosphate synthase.